We begin with the raw amino-acid sequence, 319 residues long: 3'-5' exoribonuclease YhaM (319 aa).

The segment at residues 12–90 is a DNA-binding region (OB); that stretch reads EAVDGYLLIK…QLKIASIRPT (79 aa). Residues 163-279 form the HD domain; that stretch reads HVVSMLRIGK…LHLIDNIDAK (117 aa).

This sequence belongs to the YhaM family.

Shows a 3'-5' exoribonuclease activity. In Shouchella clausii (strain KSM-K16) (Alkalihalobacillus clausii), this protein is 3'-5' exoribonuclease YhaM.